The following is a 443-amino-acid chain: UDP-N-acetylmuramate--L-alanine ligase (443 aa).

110–116 (GAHGKTS) provides a ligand contact to ATP.

The protein belongs to the MurCDEF family.

It is found in the cytoplasm. The enzyme catalyses UDP-N-acetyl-alpha-D-muramate + L-alanine + ATP = UDP-N-acetyl-alpha-D-muramoyl-L-alanine + ADP + phosphate + H(+). Its pathway is cell wall biogenesis; peptidoglycan biosynthesis. Its function is as follows. Cell wall formation. The chain is UDP-N-acetylmuramate--L-alanine ligase from Streptococcus equi subsp. zooepidemicus (strain H70).